A 147-amino-acid chain; its full sequence is Small ribosomal subunit protein uS12 (147 aa).

Belongs to the universal ribosomal protein uS12 family. Part of the 30S ribosomal subunit.

With S4 and S5 plays an important role in translational accuracy. Located at the interface of the 30S and 50S subunits. The polypeptide is Small ribosomal subunit protein uS12 (Sulfolobus acidocaldarius (strain ATCC 33909 / DSM 639 / JCM 8929 / NBRC 15157 / NCIMB 11770)).